The following is a 183-amino-acid chain: ARS-binding factor 2, mitochondrial (183 aa).

Residues 1 to 26 (MNSYSLLTRSFHESSKPLFNLASTLL) constitute a mitochondrion transit peptide. 2 consecutive DNA-binding regions (HMG box) follow at residues 43-111 (PKRP…KEFD) and 116-183 (PKKP…YPLN).

Its subcellular location is the mitochondrion. It localises to the nucleus. Its function is as follows. Specific binding to the autonomously replicating sequence 1 (ARS1). Interaction with regulatory regions: probably involved in compacting the mitochondrial genome. It might play a positive role in gene expression and replication. In Saccharomyces cerevisiae (strain ATCC 204508 / S288c) (Baker's yeast), this protein is ARS-binding factor 2, mitochondrial (ABF2).